A 428-amino-acid polypeptide reads, in one-letter code: Tol-Pal system protein TolB (428 aa).

An N-terminal signal peptide occupies residues 1–23 (MRRLYQTVCTLALLLVGLQAAHA).

This sequence belongs to the TolB family. The Tol-Pal system is composed of five core proteins: the inner membrane proteins TolA, TolQ and TolR, the periplasmic protein TolB and the outer membrane protein Pal. They form a network linking the inner and outer membranes and the peptidoglycan layer.

It localises to the periplasm. Part of the Tol-Pal system, which plays a role in outer membrane invagination during cell division and is important for maintaining outer membrane integrity. The chain is Tol-Pal system protein TolB from Alkalilimnicola ehrlichii (strain ATCC BAA-1101 / DSM 17681 / MLHE-1).